Here is a 95-residue protein sequence, read N- to C-terminus: Co-chaperonin GroES (95 aa).

Belongs to the GroES chaperonin family. As to quaternary structure, heptamer of 7 subunits arranged in a ring. Interacts with the chaperonin GroEL.

Its subcellular location is the cytoplasm. In terms of biological role, together with the chaperonin GroEL, plays an essential role in assisting protein folding. The GroEL-GroES system forms a nano-cage that allows encapsulation of the non-native substrate proteins and provides a physical environment optimized to promote and accelerate protein folding. GroES binds to the apical surface of the GroEL ring, thereby capping the opening of the GroEL channel. This is Co-chaperonin GroES from Streptococcus mutans serotype c (strain ATCC 700610 / UA159).